The following is a 72-amino-acid chain: Putative D-serine transporter DsdX-like protein (72 aa).

The protein is Putative D-serine transporter DsdX-like protein (dsdX) of Escherichia coli O157:H7.